We begin with the raw amino-acid sequence, 331 residues long: Olfactory receptor 7E178 (331 aa).

Residues 1 to 47 (MMDRYSFIMHQHRDDTVWCPSKIEEQNITRISEFHLMGLSDDLQLQP) lie on the Extracellular side of the membrane. Asn-27 is a glycosylation site (N-linked (GlcNAc...) asparagine). A helical membrane pass occupies residues 48–68 (ILFGLFLSMYLVTLLGNLLII). At 69-80 (LTVSSDSHLHSP) the chain is on the cytoplasmic side. A helical transmembrane segment spans residues 81 to 100 (MYFFLSNLSLADVSFTSTTL). At 101–119 (PKMIVDIQTHNRAISYSGC) the chain is on the extracellular side. A disulfide bridge links Cys-119 with Cys-201. Residues 120-140 (LTQMSFFMLFGCLDSLLLTAM) traverse the membrane as a helical segment. Topologically, residues 141 to 164 (AYDRFVAICHPLHYQFIMNPRLCG) are cytoplasmic. A helical transmembrane segment spans residues 165–185 (LLVFLSVLISLFVSQLHNSVV). Residues 186–218 (LQLTYFKSVDISHFFCDPSQLLNLACSDTFTNN) lie on the Extracellular side of the membrane. A helical transmembrane segment spans residues 219–239 (IVMYFVGAISGFLPISGIFFS). The Cytoplasmic segment spans residues 240 to 266 (YYKIVSSILRMPSPGGKYKAFSTCGSH). A helical membrane pass occupies residues 267 to 287 (LSVVCLFYGTGLGVYLSSAVS). Over 288 to 293 (LSPRKG) the chain is Extracellular. A helical transmembrane segment spans residues 294–314 (AVASIVYTVVTPMLNPFIYSL). Over 315 to 331 (RNQDIKRAMWRLLRKTV) the chain is Cytoplasmic.

It belongs to the G-protein coupled receptor 1 family.

The protein localises to the cell membrane. In terms of biological role, odorant receptor. The polypeptide is Olfactory receptor 7E178 (Mus musculus (Mouse)).